The primary structure comprises 492 residues: Transmembrane protein 39B (492 aa).

The tract at residues M1–P54 is disordered. A glycan (N-linked (GlcNAc...) asparagine) is linked at N8. A compositionally biased stretch (low complexity) spans G28–S53. 8 helical membrane passes run S77–I97, T115–G135, S153–L175, T185–L205, E288–V308, L322–S342, I421–M441, and H447–L467.

This sequence belongs to the TMEM39 family.

Its subcellular location is the endoplasmic reticulum membrane. Its function is as follows. May protect the cells against DNA damage caused by exposure to the cold-warming stress and facilitates tissue damage repair during the recovery phase. This chain is Transmembrane protein 39B, found in Homo sapiens (Human).